The chain runs to 263 residues: Pimeloyl-[acyl-carrier protein] methyl ester esterase (263 aa).

Substrate contacts are provided by residues W28, 86 to 87 (SL), and 149 to 153 (FLAIQ). The Nucleophile role is filled by S86. Catalysis depends on residues D213 and H240. H240 serves as a coordination point for substrate.

The protein belongs to the AB hydrolase superfamily. Carboxylesterase BioH family. Monomer.

The protein localises to the cytoplasm. The catalysed reaction is 6-carboxyhexanoyl-[ACP] methyl ester + H2O = 6-carboxyhexanoyl-[ACP] + methanol + H(+). The protein operates within cofactor biosynthesis; biotin biosynthesis. Functionally, the physiological role of BioH is to remove the methyl group introduced by BioC when the pimeloyl moiety is complete. It allows to synthesize pimeloyl-ACP via the fatty acid synthetic pathway through the hydrolysis of the ester bonds of pimeloyl-ACP esters. The polypeptide is Pimeloyl-[acyl-carrier protein] methyl ester esterase (Shewanella oneidensis (strain ATCC 700550 / JCM 31522 / CIP 106686 / LMG 19005 / NCIMB 14063 / MR-1)).